Reading from the N-terminus, the 547-residue chain is Isoflavonoid 7-O-beta-apiosyl-glucoside beta-glycosidase (547 aa).

An N-terminal signal peptide occupies residues 1 to 31; the sequence is MHAMTFKAILLLGLLALVSTSASIAFAKEVR. Glutamine 59 is an a beta-D-glucoside binding site. N-linked (GlcNAc...) asparagine glycosylation is found at asparagine 72 and asparagine 132. A beta-D-glucoside is bound at residue histidine 159. Residue asparagine 175 is glycosylated (N-linked (GlcNAc...) asparagine). An a beta-D-glucoside-binding site is contributed by 204–205; it reads NE. Residue glutamate 205 is the Proton donor of the active site. Cysteine 224 and cysteine 232 are oxidised to a cystine. N-linked (GlcNAc...) asparagine glycosylation occurs at asparagine 285. A beta-D-glucoside-binding positions include tyrosine 348, glutamate 419, tryptophan 468, 475–476, and phenylalanine 484; that span reads EW. The active-site Nucleophile is the glutamate 419. An N-linked (GlcNAc...) asparagine glycan is attached at asparagine 490.

The protein belongs to the glycosyl hydrolase 1 family. As to quaternary structure, homotetramer.

The enzyme catalyses 7-[beta-D-apiofuranosyl-(1-&gt;6)-beta-D-glucopyranosyloxy]isoflavonoid + H2O = a 7-hydroxyisoflavonoid + beta-D-apiofuranosyl-(1-&gt;6)-D-glucose.. Not inhibited by iron, calcium, mercury, manganese, zinc or EDTA. In terms of biological role, hydrolyzes dalpatein 7-O-beta-D-apiofuranosyl-(1-&gt;6)-beta-D-glucopyranoside and dalnigrein 7-O-beta-D-apiofuranosyl-(1-&gt;6)-beta-D-glucopyranoside. Also has activity towards pNP-beta-D-fucoside and pNP-beta-D-glucoside, but not pNP-beta-cellobioside. This is Isoflavonoid 7-O-beta-apiosyl-glucoside beta-glycosidase from Dalbergia nigrescens (Thai blackwood).